Reading from the N-terminus, the 346-residue chain is Peroxidase 9 (346 aa).

Positions 1–23 (MAISKLIPTLVLFVLFSFDVSVA) are cleaved as a signal peptide. Intrachain disulfides connect Cys54/Cys134, Cys87/Cys92, Cys140/Cys342, and Cys219/Cys251. His85 (proton acceptor) is an active-site residue. Residues Asp86, Val89, Gly91, Asp93, and Ser95 each coordinate Ca(2+). Pro182 provides a ligand contact to substrate. The N-linked (GlcNAc...) asparagine glycan is linked to Asn185. His212 serves as a coordination point for heme b. Thr213 lines the Ca(2+) pocket. Ca(2+) contacts are provided by Asp264, Ser267, and Asp272.

It belongs to the peroxidase family. Classical plant (class III) peroxidase subfamily. Heme b is required as a cofactor. It depends on Ca(2+) as a cofactor.

The protein localises to the secreted. The catalysed reaction is 2 a phenolic donor + H2O2 = 2 a phenolic radical donor + 2 H2O. In terms of biological role, removal of H(2)O(2), oxidation of toxic reductants, biosynthesis and degradation of lignin, suberization, auxin catabolism, response to environmental stresses such as wounding, pathogen attack and oxidative stress. These functions might be dependent on each isozyme/isoform in each plant tissue. The sequence is that of Peroxidase 9 (PER9) from Arabidopsis thaliana (Mouse-ear cress).